The primary structure comprises 34 residues: Photosystem II reaction center protein M (34 aa).

A helical transmembrane segment spans residues isoleucine 5–isoleucine 25.

Belongs to the PsbM family. PSII is composed of 1 copy each of membrane proteins PsbA, PsbB, PsbC, PsbD, PsbE, PsbF, PsbH, PsbI, PsbJ, PsbK, PsbL, PsbM, PsbT, PsbX, PsbY, PsbZ, Psb30/Ycf12, at least 3 peripheral proteins of the oxygen-evolving complex and a large number of cofactors. It forms dimeric complexes. Detected in both etioplasts and green leaves; PSII is only assembled in green leaves.

The protein resides in the plastid. It is found in the chloroplast thylakoid membrane. In terms of biological role, one of the components of the core complex of photosystem II (PSII). PSII is a light-driven water:plastoquinone oxidoreductase that uses light energy to abstract electrons from H(2)O, generating O(2) and a proton gradient subsequently used for ATP formation. It consists of a core antenna complex that captures photons, and an electron transfer chain that converts photonic excitation into a charge separation. This subunit is found at the monomer-monomer interface. The sequence is that of Photosystem II reaction center protein M from Hordeum vulgare (Barley).